A 585-amino-acid polypeptide reads, in one-letter code: MGLRFPPKVLEHILSFIDSNEDRNSVSLVCKSWFETERKTRKRVFVGNCYAVSPAAVTRRFPEMRSLTLKGKPHFADYNLVPDGWGGYAWPWIEAMAAKSSSLEEIRMKRMVVTDECLEKIAASFKDFKVLVLTSCEGFSTDGIAAIAATCRNLRVLELRECIVEDLGGDWLSYFPESSTSLVSLDFSCLDSEVKISDLERLVSRSPNLKSLKLNPAVTLDGLVSLLRCAPQLTELGTGSFAAQLKPEAFSKLSEAFSNCKQLQSLSGLWDVLPEYLPALYSVCPGLTSLNLSYATVRMPDLVELLRRCSKLQKLWVMDLIEDKGLEAVASYCKELRELRVFPSEPDLDATNIPLTEQGLVFVSKGCRKLESVLYFCVQFTNAALFTIARKRPNLKCFRLCVIEPFAPDYKTNEPLDKGFKAIAEGCRDLRRLSVSGLLSDKAFKYIGKHAKKVRMLSIAFAGDSDLMLHHLLSGCESLKKLEIRDCPFGDTALLEHAAKLETMRSLWMSSCFVSFGACKLLSQKMPRLNVEVIDEHPPESRPESSPVERIYIYRTVAGPRMDTPEFVWTIHKNPENGVSHLAIK.

The region spanning 1 to 48 is the F-box domain; the sequence is MGLRFPPKVLEHILSFIDSNEDRNSVSLVCKSWFETERKTRKRVFVGN. Lysine 70 provides a ligand contact to 1D-myo-inositol hexakisphosphate. The tract at residues 77 to 78 is interaction with auxin-responsive proteins; that stretch reads DY. Residues 109–110 and arginine 340 each bind 1D-myo-inositol hexakisphosphate; that span reads KR. An interaction with auxin-responsive proteins region spans residues 343–348; it reads PSEPDL. 397-399 lines the 1D-myo-inositol hexakisphosphate pocket; that stretch reads CFR. An interaction with auxin-responsive proteins region spans residues 401–405; that stretch reads CVIEP. Residue arginine 432 participates in 1D-myo-inositol hexakisphosphate binding. The segment at 460–461 is interaction with auxin-responsive proteins; it reads AF. 1D-myo-inositol hexakisphosphate contacts are provided by residues 480–481 and arginine 505; that span reads KK.

As to quaternary structure, part of a SCF (SKP1-cullin-F-box) protein ligase complex. Interacts with CUL1, SKP1A/ASK1 and SKP1B/ASK2. Interacts with Aux/IAA proteins (IAA7 and IAA12) in an auxin-dependent manner. In terms of tissue distribution, ubiquitous.

Its subcellular location is the nucleus. It functions in the pathway protein modification; protein ubiquitination. In terms of biological role, component of SCF(ASK-cullin-F-box) E3 ubiquitin ligase complexes, which may mediate the ubiquitination and subsequent proteasomal degradation of target proteins. Auxin receptor that mediates Aux/IAA proteins proteasomal degradation and auxin-regulated transcription. Involved in embryogenesis regulation by auxin. Confers sensitivity to the virulent bacterial pathogen P.syringae. Mediates glucose repression in yeast. This chain is GRR1-like protein 1 (GRH1), found in Arabidopsis thaliana (Mouse-ear cress).